The chain runs to 894 residues: Probable ion channel SYM8 (894 aa).

The interval M1–K124 is disordered. Composition is skewed to polar residues over residues E7–K16, T24–L33, and I44–Y63. Transmembrane regions (helical) follow at residues S134–L154, T204–I224, L267–V287, and I319–V339. RCK N-terminal domains follow at residues R360–V501 and P620–I769. The stretch at V390–G415 forms a coiled coil.

It belongs to the castor/pollux (TC 1.A.1.23) family. Homotetramer.

It is found in the nucleus membrane. Its function is as follows. Required for both rhizobial and mycorrhizal symbiosis. Involved in Nod-factor-induced calcium spiking. May induce a change in membrane polarization that activates the opening of a calcium channel required for calcium spiking. Might be calcium gated. The sequence is that of Probable ion channel SYM8 (SYM8) from Pisum sativum (Garden pea).